A 358-amino-acid chain; its full sequence is 3-isopropylmalate dehydrogenase (358 aa).

77-90 (GPKWTHLPPDQQPE) serves as a coordination point for NAD(+). Substrate-binding residues include R98, R108, R137, and D226. Residues D226, D250, and D254 each coordinate Mg(2+). 284–296 (GSAPDIAGKGIAN) provides a ligand contact to NAD(+).

This sequence belongs to the isocitrate and isopropylmalate dehydrogenases family. LeuB type 1 subfamily. Homodimer. The cofactor is Mg(2+). It depends on Mn(2+) as a cofactor.

Its subcellular location is the cytoplasm. The catalysed reaction is (2R,3S)-3-isopropylmalate + NAD(+) = 4-methyl-2-oxopentanoate + CO2 + NADH. It functions in the pathway amino-acid biosynthesis; L-leucine biosynthesis; L-leucine from 3-methyl-2-oxobutanoate: step 3/4. Its function is as follows. Catalyzes the oxidation of 3-carboxy-2-hydroxy-4-methylpentanoate (3-isopropylmalate) to 3-carboxy-4-methyl-2-oxopentanoate. The product decarboxylates to 4-methyl-2 oxopentanoate. This Mannheimia succiniciproducens (strain KCTC 0769BP / MBEL55E) protein is 3-isopropylmalate dehydrogenase.